Reading from the N-terminus, the 123-residue chain is MEKLRVFELRDKSDAELLKLLDDLKQELATFRVSKVTATGTSKLSKITLVRKAVAKVLTVYNQRKKEEARKKYKKLSKTPLNLRPKLTRAKRKALTTKQLTMKTIKERKRAENLPKRKYALLA.

Belongs to the universal ribosomal protein uL29 family.

The sequence is that of Large ribosomal subunit protein uL29 (RPL35) from Theileria lestoquardi.